A 239-amino-acid polypeptide reads, in one-letter code: Probable transcriptional regulatory protein ACL_0044 (239 aa).

It belongs to the TACO1 family.

It is found in the cytoplasm. The polypeptide is Probable transcriptional regulatory protein ACL_0044 (Acholeplasma laidlawii (strain PG-8A)).